The primary structure comprises 302 residues: Ethylmalonyl-CoA decarboxylase (302 aa).

Belongs to the enoyl-CoA hydratase/isomerase family.

The protein localises to the cytoplasm. It is found in the cytosol. The catalysed reaction is (2S)-ethylmalonyl-CoA + H(+) = butanoyl-CoA + CO2. The enzyme catalyses (S)-methylmalonyl-CoA + H(+) = propanoyl-CoA + CO2. It catalyses the reaction (2R)-ethylmalonyl-CoA + H(+) = butanoyl-CoA + CO2. Functionally, decarboxylates ethylmalonyl-CoA, a potentially toxic metabolite, to form butyryl-CoA, suggesting it might be involved in metabolite proofreading. Acts preferentially on (S)-ethylmalonyl-CoA but also has some activity on the (R)-isomer. Also has methylmalonyl-CoA decarboxylase activity at lower level. The protein is Ethylmalonyl-CoA decarboxylase (echdc1) of Danio rerio (Zebrafish).